A 551-amino-acid polypeptide reads, in one-letter code: GMP synthase [glutamine-hydrolyzing] (551 aa).

The Glutamine amidotransferase type-1 domain maps to 40–233 (KILIVDFGSQ…VRKIAGLTGD (194 aa)). Residue cysteine 117 is the Nucleophile of the active site. Catalysis depends on residues histidine 207 and glutamate 209. Residues 234 to 426 (WTMRAFREEE…LGLPEIFVGR (193 aa)) enclose the GMPS ATP-PPase domain. Position 261-267 (261-267 (SGGVDSA)) interacts with ATP.

Homodimer.

The catalysed reaction is XMP + L-glutamine + ATP + H2O = GMP + L-glutamate + AMP + diphosphate + 2 H(+). The protein operates within purine metabolism; GMP biosynthesis; GMP from XMP (L-Gln route): step 1/1. Functionally, catalyzes the synthesis of GMP from XMP. This chain is GMP synthase [glutamine-hydrolyzing], found in Bradyrhizobium diazoefficiens (strain JCM 10833 / BCRC 13528 / IAM 13628 / NBRC 14792 / USDA 110).